The following is a 116-amino-acid chain: Large ribosomal subunit protein bL20 (116 aa).

The protein belongs to the bacterial ribosomal protein bL20 family.

Functionally, binds directly to 23S ribosomal RNA and is necessary for the in vitro assembly process of the 50S ribosomal subunit. It is not involved in the protein synthesizing functions of that subunit. The protein is Large ribosomal subunit protein bL20 of Desulforapulum autotrophicum (strain ATCC 43914 / DSM 3382 / VKM B-1955 / HRM2) (Desulfobacterium autotrophicum).